The sequence spans 130 residues: MIVRTTDEITGTHRDVAAANWRSKRIVLADDAVGFSFHETTIDADSVSEFHYRHHVEAVWIVEGTGTLTNHETGEEHPLRPGTMYLLNGHERHRVTCDTTMRMLCVFNPPVTGQEIHDETGAYPPAVQAS.

This sequence belongs to the ectoine synthase family.

The enzyme catalyses (2S)-4-acetamido-2-aminobutanoate = L-ectoine + H2O. It functions in the pathway amine and polyamine biosynthesis; ectoine biosynthesis; L-ectoine from L-aspartate 4-semialdehyde: step 3/3. In terms of biological role, catalyzes the circularization of gamma-N-acetyl-alpha,gamma-diaminobutyric acid (ADABA) to ectoine (1,4,5,6-tetrahydro-2-methyl-4-pyrimidine carboxylic acid), which is an excellent osmoprotectant. In Mycolicibacterium gilvum (strain PYR-GCK) (Mycobacterium gilvum (strain PYR-GCK)), this protein is L-ectoine synthase.